The chain runs to 575 residues: Trihelix transcription factor GT-2 (575 aa).

Residues 1–11 are compositionally biased toward low complexity; sequence MSGNSEGLLES. Disordered regions lie at residues 1-44, 157-181, 232-256, and 339-364; these read MSGN…RWPR, IPWI…HQVS, FSSS…SSRK, and GGQP…DHSI. The region spanning 40–98 is the Myb-like 1 domain; sequence NRWPRPETLALLRIRSEMDKAFRDSTLKAPLWEEISRKMMELGYKRSSKKCKEKFENVY. Low complexity-rich tracts occupy residues 161–172 and 232–241; these read SSSNPSTEKSSS and FSSSTSSSTA. Over residues 355–364 the composition is skewed to polar residues; that stretch reads RKQYQSDHSI. The Myb-like 2 domain maps to 390–454; that stretch reads SVSPSSSRWP…RCKEKWENIN (65 aa). Positions 513 to 575 are disordered; that stretch reads TQTEFETDQR…PMDINNNLFT (63 aa). The segment covering 528–555 has biased composition (acidic residues); that stretch reads KEDEEEGESEEDEYDEEEEGEGDNETSE. The segment covering 561–575 has biased composition (polar residues); sequence NKTSSPMDINNNLFT.

The protein localises to the nucleus. In terms of biological role, probable transcription factor that binds specific DNA sequence. This chain is Trihelix transcription factor GT-2 (GT-2), found in Arabidopsis thaliana (Mouse-ear cress).